The primary structure comprises 330 residues: 4-hydroxythreonine-4-phosphate dehydrogenase (330 aa).

Substrate contacts are provided by His136 and Thr137. The a divalent metal cation site is built by His166, His211, and His266. 3 residues coordinate substrate: Lys274, Asn283, and Arg292.

It belongs to the PdxA family. In terms of assembly, homodimer. Requires Zn(2+) as cofactor. The cofactor is Mg(2+). Co(2+) is required as a cofactor.

Its subcellular location is the cytoplasm. It catalyses the reaction 4-(phosphooxy)-L-threonine + NAD(+) = 3-amino-2-oxopropyl phosphate + CO2 + NADH. It functions in the pathway cofactor biosynthesis; pyridoxine 5'-phosphate biosynthesis; pyridoxine 5'-phosphate from D-erythrose 4-phosphate: step 4/5. Catalyzes the NAD(P)-dependent oxidation of 4-(phosphooxy)-L-threonine (HTP) into 2-amino-3-oxo-4-(phosphooxy)butyric acid which spontaneously decarboxylates to form 3-amino-2-oxopropyl phosphate (AHAP). The protein is 4-hydroxythreonine-4-phosphate dehydrogenase of Erwinia tasmaniensis (strain DSM 17950 / CFBP 7177 / CIP 109463 / NCPPB 4357 / Et1/99).